The chain runs to 1333 residues: Partitioning defective 3 homolog (1333 aa).

At S25 the chain carries Phosphoserine. The residue at position 91 (T91) is a Phosphothreonine. A disordered region spans residues 143-262 (SSDPALTGLS…VGHADTGLEN (120 aa)). Composition is skewed to polar residues over residues 150-163 (GLST…FSSE) and 171-187 (TRWS…TAGS). Phosphoserine is present on residues S156 and S174. The span at 190-203 (TCDRKKDENYRSLP) shows a compositional bias: basic and acidic residues. A compositionally biased stretch (polar residues) spans 207–224 (SSWSNQFQRDNARSSLSA). A PDZ 1 domain is found at 271–359 (MVKLVQVPND…ARVIWFHVVP (89 aa)). Disordered stretches follow at residues 369-388 (LSQR…DSHC) and 397-441 (NAPQ…APPS). A Phosphoserine modification is found at S383. 2 PDZ domains span residues 461-546 (NIQL…LVFR) and 590-677 (EVPL…GMIQ). Y489 is modified (phosphotyrosine). S692, S695, S715, S728, S806, and S824 each carry phosphoserine. Interaction with PRKCI and PRKCZ regions lie at residues 712-932 (RRIS…YDKP) and 712-936 (RRIS…MVDD). K831 is subject to N6-acetyllysine. S834 is modified (phosphoserine). K848 carries the post-translational modification N6-acetyllysine. Residues S849 and S869 each carry the phosphoserine modification. 5 disordered regions span residues 861–884 (TVDD…KKSS), 928–1011 (SYDK…AKKG), 1024–1071 (KHRK…ERQA), 1110–1267 (PQSP…LGGH), and 1283–1333 (QEQR…PFYS). An N6-acetyllysine modification is found at K881. Residues 931–1333 (KPMVDDDDEG…TPEKGRPFYS (403 aa)) are interaction with FRMD4A. Residues 935 to 949 (DDDDEGMETLEEDTE) are compositionally biased toward acidic residues. S958 bears the Phosphoserine; by AURKA mark. 2 positions are modified to phosphoserine: S967 and S969. 2 stretches are compositionally biased toward basic and acidic residues: residues 977-1005 (DPEK…EKDK) and 1026-1039 (RKDD…RIKI). S1042 is modified (phosphoserine). Over residues 1046-1071 (EEDRVRMKEEQERIQAKTREFRERQA) the composition is skewed to basic and acidic residues. Residues 1046-1078 (EEDRVRMKEEQERIQAKTREFRERQARERDYAE) are a coiled coil. Over residues 1134–1143 (PGDSNRSTPS) the composition is skewed to polar residues. Basic and acidic residues predominate over residues 1144–1171 (NHDRIQRLRQEFQQAKQDEDVEDRRRTY). Coiled coils occupy residues 1145 to 1168 (HDRI…EDRR), 1195 to 1218 (VQVQ…YSSL), and 1274 to 1295 (MLET…LKKQ). The segment covering 1176 to 1199 (SWSSSRPASQSGRHSVSVEVQVQR) has biased composition (low complexity). Polar residues predominate over residues 1215-1236 (YSSLPRQSRKNASSISQDSWEQ). The span at 1283–1292 (QEQRRKEQQL) shows a compositional bias: basic and acidic residues. Polar residues predominate over residues 1314–1323 (SQVARLNRLQ). The span at 1324-1333 (TPEKGRPFYS) shows a compositional bias: basic and acidic residues. K1327 carries the N6-acetyllysine modification.

This sequence belongs to the PAR3 family. Interacts with PRCKI and CDH5. Interacts (via PDZ 3 domain) with PTEN (via C-terminus). Component of a complex whose core is composed of ARHGAP17, AMOT, PALS1, PATJ and PARD3/PAR3. Interacts with LIMK2, AURKA and AURKB. Component of the Par polarity complex, composed of at least phosphorylated PRKCZ, PARD3 and TIAM1. Interacts with ECT2 and FBF1. Interacts (via PDZ 1 domain) with F11R/JAM1, PARD6A and PARD6B. Part of a complex with PARD6A or PARD6B, PRKCI or PRKCZ and CDC42 or RAC1. Directly interacts with TIAM1 and TIAM2. Interacts with SIRT2. Interacts (via coiled-coil domain) with FRMD4A. Found in a complex with PARD3, CYTH1 and FRMD4A. Interacts with SAPCD2. Interacts with PRKCA. As to quaternary structure, interacts with PRKCZ. Post-translationally, acetylated. Deacetylated by SIRT2, thereby inhibiting Schwann cell peripheral myelination. In terms of processing, phosphorylation at Ser-824 by PRKCZ and PRKCI occurs at the most apical tip of epithelial cell-cell contacts during the initial phase of tight junction formation and may promote dissociation of the complex with PARD6. EGF-induced Tyr-1123 phosphorylation mediates dissociation from LIMK2. Phosphorylation by AURKA at Ser-958 is required for the normal establishment of neuronal polarity. Isoform 4 and isoform 5 are phosphorylated during oocyte maturation. As to expression, all isoforms are expressed in heart, while expression in brain is mainly limited to isoform 1, and to isoform 3 to a weaker level.

Its subcellular location is the cytoplasm. The protein localises to the endomembrane system. The protein resides in the cell junction. It is found in the tight junction. It localises to the adherens junction. Its subcellular location is the cell cortex. The protein localises to the cytoskeleton. The protein resides in the cell membrane. Functionally, adapter protein involved in asymmetrical cell division and cell polarization processes. Seems to play a central role in the formation of epithelial tight junctions. Targets the phosphatase PTEN to cell junctions. Association with PARD6B may prevent the interaction of PARD3 with F11R/JAM1, thereby preventing tight junction assembly. The PARD6-PARD3 complex links GTP-bound Rho small GTPases to atypical protein kinase C proteins. Required for establishment of neuronal polarity and normal axon formation in cultured hippocampal neurons. Involved in Schwann cell peripheral myelination. The chain is Partitioning defective 3 homolog (Pard3) from Mus musculus (Mouse).